The chain runs to 902 residues: Glutamate receptor 4 (902 aa).

The first 20 residues, methionine 1 to methionine 20, serve as a signal peptide directing secretion. Residues alanine 22 to alanine 544 lie on the Extracellular side of the membrane. N-linked (GlcNAc...) asparagine glycans are attached at residues asparagine 52, asparagine 56, asparagine 258, asparagine 371, asparagine 407, and asparagine 414. A disulfide bridge links cysteine 84 with cysteine 331. Residues proline 500, threonine 502, and arginine 507 each contribute to the L-glutamate site. Residues tyrosine 545 to valine 565 traverse the membrane as a helical segment. Residues serine 566–glutamate 592 lie on the Cytoplasmic side of the membrane. Positions phenylalanine 593–glutamine 608 form an intramembrane region, helical; Pore-forming. The stretch at glutamine 609–cysteine 611 is an intramembrane region. Cysteine 611 carries the S-palmitoyl cysteine lipid modification. Residues aspartate 612–serine 617 are Cytoplasmic-facing. Residues leucine 618–tyrosine 638 form a helical membrane-spanning segment. The Extracellular segment spans residues threonine 639 to asparagine 813. L-glutamate is bound by residues serine 676, threonine 677, and glutamate 727. Cysteine 740 and cysteine 795 form a disulfide bridge. A helical transmembrane segment spans residues valine 814–isoleucine 834. Topologically, residues glutamate 835–proline 902 are cytoplasmic. Cysteine 837 is lipidated: S-palmitoyl cysteine. Serine 862 carries the post-translational modification Phosphoserine.

The protein belongs to the glutamate-gated ion channel (TC 1.A.10.1) family. GRIA4 subfamily. As to quaternary structure, homotetramer or heterotetramer of pore-forming glutamate receptor subunits. Tetramers may be formed by the dimerization of dimers. Interacts with EPB41L1 via its C-terminus. Isoform 3 interacts with PICK1. Found in a complex with GRIA1, GRIA2, GRIA3, CNIH2, CNIH3, CACNG2, CACNG3, CACNG4, CACNG5, CACNG7 and CACNG8. Interacts with CACNG5 and PRKCG. Found in a complex with GRIA1, GRIA2, GRIA3, DLG4, CACNG8 and CNIH2. In terms of processing, palmitoylated. Depalmitoylated upon L-glutamate stimulation. ZDHHC3/GODZ specifically palmitoylates Cys-611, which leads to Golgi retention and decreased cell surface expression. In contrast, Cys-837 palmitoylation does not affect cell surface expression but regulates stimulation-dependent endocytosis. Post-translationally, phosphorylated at Ser-862 by PRKCG; phosphorylation increases plasma membrane-associated GRI4 expression.

Its subcellular location is the cell membrane. It is found in the postsynaptic cell membrane. The protein localises to the cell projection. It localises to the dendrite. The catalysed reaction is Ca(2+)(in) = Ca(2+)(out). It carries out the reaction Na(+)(in) = Na(+)(out). It catalyses the reaction Mg(2+)(in) = Mg(2+)(out). Functionally, ionotropic glutamate receptor that functions as a ligand-gated cation channel, gated by L-glutamate and glutamatergic agonists such as alpha-amino-3-hydroxy-5-methyl-4-isoxazolepropionic acid (AMPA), quisqualic acid, and kainic acid. L-glutamate acts as an excitatory neurotransmitter at many synapses in the central nervous system and plays an important role in fast excitatory synaptic transmission. Binding of the excitatory neurotransmitter L-glutamate induces a conformation change, leading to the opening of the cation channel, and thereby converts the chemical signal to an electrical impulse upon entry of monovalent and divalent cations such as sodium and calcium. The receptor then desensitizes rapidly and enters a transient inactive state, characterized by the presence of bound agonist. In the presence of CACNG8, shows resensitization which is characterized by a delayed accumulation of current flux upon continued application of L-glutamate. The protein is Glutamate receptor 4 of Mus musculus (Mouse).